The following is a 312-amino-acid chain: Bifunctional pinoresinol-lariciresinol reductase (312 aa).

Residues 11–17 (GGTGYIG), Arg-36, and Lys-45 contribute to the NADP(+) site. The active-site Proton acceptor is the Lys-138. Residue Arg-142 coordinates NADP(+). His-270 lines the substrate pocket.

It belongs to the NmrA-type oxidoreductase family. Isoflavone reductase subfamily. As to quaternary structure, dimer.

The enzyme catalyses (+)-lariciresinol + NADP(+) = (+)-pinoresinol + NADPH + H(+). The catalysed reaction is (-)-secoisolariciresinol + NADP(+) = (+)-lariciresinol + NADPH + H(+). In terms of biological role, reductase involved in lignan biosynthesis. Catalyzes the enantioselective sequential conversion of (+)-pinoresinol into (+)-lariciresinol and of (+)-lariciresinol into (-)-secoisolariciresinol. Abstracts the 4R-hydride from the NADPH cofactor during catalysis. The protein is Bifunctional pinoresinol-lariciresinol reductase of Thuja plicata (Western red-cedar).